A 126-amino-acid polypeptide reads, in one-letter code: Large ribosomal subunit protein bL19 (126 aa).

Belongs to the bacterial ribosomal protein bL19 family.

This protein is located at the 30S-50S ribosomal subunit interface and may play a role in the structure and function of the aminoacyl-tRNA binding site. In Albidiferax ferrireducens (strain ATCC BAA-621 / DSM 15236 / T118) (Rhodoferax ferrireducens), this protein is Large ribosomal subunit protein bL19.